The following is a 356-amino-acid chain: Sulfate/thiosulfate import ATP-binding protein CysA (356 aa).

Residues 3-237 (IEVKNLVKRF…PKNSFVFHFL (235 aa)) form the ABC transporter domain. 35-42 (GPSGSGKT) contributes to the ATP binding site.

This sequence belongs to the ABC transporter superfamily. Sulfate/tungstate importer (TC 3.A.1.6) family. As to quaternary structure, the complex is composed of two ATP-binding proteins (CysA), two transmembrane proteins (CysT and CysW) and a solute-binding protein (CysP).

It is found in the cell inner membrane. It catalyses the reaction sulfate(out) + ATP + H2O = sulfate(in) + ADP + phosphate + H(+). The catalysed reaction is thiosulfate(out) + ATP + H2O = thiosulfate(in) + ADP + phosphate + H(+). In terms of biological role, part of the ABC transporter complex CysAWTP involved in sulfate/thiosulfate import. Responsible for energy coupling to the transport system. In Leptospira interrogans serogroup Icterohaemorrhagiae serovar copenhageni (strain Fiocruz L1-130), this protein is Sulfate/thiosulfate import ATP-binding protein CysA.